The sequence spans 170 residues: Tubulin polymerization-promoting protein family member 2 (170 aa).

The interval 127 to 147 is disordered; it reads TGTHKERFDESGKGKGIAGRE. Positions 129-139 are enriched in basic and acidic residues; sequence THKERFDESGK.

Belongs to the TPPP family.

It is found in the cytoplasm. The protein resides in the cytosol. It localises to the cell projection. Its subcellular location is the cilium. The protein localises to the flagellum. Probable regulator of microtubule dynamics required for sperm motility. In contrast to other members of the family, has no microtubule bundling activity. In Macaca fascicularis (Crab-eating macaque), this protein is Tubulin polymerization-promoting protein family member 2 (TPPP2).